We begin with the raw amino-acid sequence, 312 residues long: Malate dehydrogenase (312 aa).

NAD(+) contacts are provided by residues 7-13 and D34; that span reads GASGGIG. R81 and R87 together coordinate substrate. Residues N94 and 117-119 each bind NAD(+); that span reads ITN. Residues N119 and R153 each contribute to the substrate site. H177 functions as the Proton acceptor in the catalytic mechanism. An NAD(+)-binding site is contributed by M227.

It belongs to the LDH/MDH superfamily. MDH type 1 family. As to quaternary structure, homodimer.

It catalyses the reaction (S)-malate + NAD(+) = oxaloacetate + NADH + H(+). Catalyzes the reversible oxidation of malate to oxaloacetate. The sequence is that of Malate dehydrogenase from Actinobacillus succinogenes (strain ATCC 55618 / DSM 22257 / CCUG 43843 / 130Z).